The chain runs to 249 residues: MALCEAVASGSPLVWPRVLLFGDSITQFSFQQGGWGASLADMLVRKCDVLNRGFSGYNTRWAKIILPRLVRKGSGLDSPVAVTIFFGANDSALKDENPKQHVPLEEFVANLRSMVRYLRSVDVPEGRLILITPPPLCEAAWAQECLQQGCKLNRLNSVVGEYARACLQVAQDCGADALDLWSLMQKDGQDFSSYLSDGLHLSPKGNEFVFSHLWPLIEKKVSSLPFLLPYWRDIAEARPELSLLGDGDH.

Serine 24 serves as the catalytic Nucleophile. Lysine 63 is modified (N6-succinyllysine). The active-site Proton donor is the aspartate 197. Residue histidine 200 is the Proton acceptor of the active site.

This sequence belongs to the 'GDSL' lipolytic enzyme family. IAH1 subfamily.

In terms of biological role, probable lipase. In Bos taurus (Bovine), this protein is Isoamyl acetate-hydrolyzing esterase 1 homolog (IAH1).